The chain runs to 125 residues: MAFPNTSAQQAETNSKSLEEIHTRKQLLAGGIMNLGLSNTNQMPAPQLLGQPSTTTATPDLVSTNSTPPRAAFNPSSSTTLGFFIPQDSYFGNSLIPVLPRLELPATPSTTTPPITPIANANNPK.

The segment covering 1–16 (MAFPNTSAQQAETNSK) has biased composition (polar residues). 3 disordered regions span residues 1–20 (MAFP…SLEE), 38–74 (SNTN…AAFN), and 105–125 (PATP…NNPK).

Belongs to the SOSS-C family.

The sequence is that of SOSS complex subunit C homolog A from Drosophila willistoni (Fruit fly).